A 426-amino-acid polypeptide reads, in one-letter code: Tyrosine--tRNA ligase (426 aa).

L-tyrosine is bound at residue tyrosine 36. Residues 41–50 carry the 'HIGH' region motif; it reads PTAPSLHVGH. L-tyrosine is bound by residues tyrosine 174 and glutamine 178. Residues 234-238 carry the 'KMSKS' region motif; sequence KLGKS. Lysine 237 is a binding site for ATP. The S4 RNA-binding domain maps to 359-416; sequence DGIVDLLVASGLSPSRGAARRTIDEGGVLVNNIRIQSEEWTPRTSDFLHGRWLVLRRG.

The protein belongs to the class-I aminoacyl-tRNA synthetase family. TyrS type 1 subfamily. In terms of assembly, homodimer.

The protein localises to the cytoplasm. The catalysed reaction is tRNA(Tyr) + L-tyrosine + ATP = L-tyrosyl-tRNA(Tyr) + AMP + diphosphate + H(+). In terms of biological role, catalyzes the attachment of tyrosine to tRNA(Tyr) in a two-step reaction: tyrosine is first activated by ATP to form Tyr-AMP and then transferred to the acceptor end of tRNA(Tyr). This Mycobacterium leprae (strain TN) protein is Tyrosine--tRNA ligase.